The sequence spans 444 residues: MDHHLDPNLDNLFEMYGESVEECATQVANGTLLTLLQMLVLVWMFFLVWRLSLPPRIQTFLHIAMTTLTVAWFSPKKLESVMIFHTFSLISLFCAVQKLNGYRILGLNIMLLIALQNICSRANADDYFLTLRGVLMMHIMRLSTASFAIVDSNVRSISFDQLTLYLEYIYFPPFIIFGPYVTFDQFVKMREKKWTRFEEQLGVFVQGSVLIFIGITLAIISSCYVDFFEPGSQFVEDALTAMSFRCSHYFICLSTQAFAMFLGSKIVVANPVNIEFSRSTLQTVSEWNRPFHTYLHENIFKRRFFQSTALNVLLTFAVSALLHARDYQMWLTLLALGFIAYSETVFRKRIADRFSMCVAAKPCSVRANRRICKHKHASFSKRVLIINLFFMILSMYHLVFTGMTFTDDYAAIGYPFSHTWTIWGTHYYSSFIVSFAFLALSKII.

The next 10 membrane-spanning stretches (helical) occupy residues 29 to 49 (NGTL…FLVW), 81 to 101 (VMIF…KLNG), 128 to 150 (FLTL…FAIV), 163 to 183 (TLYL…YVTF), 201 to 221 (LGVF…AIIS), 249 to 269 (YFIC…IVVA), 304 to 324 (FFQS…LLHA), 326 to 346 (DYQM…ETVF), 383 to 403 (VLII…FTGM), and 420 to 440 (WTIW…FLAL). His323 is a catalytic residue.

It belongs to the membrane-bound acyltransferase family. Porcupine subfamily.

Its subcellular location is the membrane. It carries out the reaction [Wnt protein]-L-serine + (9Z)-hexadecenoyl-CoA = [Wnt protein]-O-(9Z)-hexadecenoyl-L-serine + CoA. Functionally, key regulator of the Wnt signaling pathway that mediates lipid modification of Wnt proteins. Acts as a protein-serine O-palmitoleoyltransferase that catalyzes the attachment of palmitoleate, a 16-carbon monounsaturated fatty acid (C16:1(9Z)), to Wnt proteins. Serine palmitoleoylation of WNT proteins is required for efficient binding to frizzled receptors. Has a role in cell specification, specifically in blastomere signaling. Involved in cytosketetal polarity. Required for the orientation of mitotic spindle axis. This is Protein-serine O-palmitoleoyltransferase porcupine from Caenorhabditis briggsae.